Consider the following 428-residue polypeptide: GTPase Obg (428 aa).

The 158-residue stretch at 1-158 (MFVDQTKIDV…RTLRLELKVL (158 aa)) folds into the Obg domain. In terms of domain architecture, OBG-type G spans 159-328 (ADVGLVGFPS…LMGKTADLVE (170 aa)). GTP is bound by residues 165–172 (GFPSVGKS), 190–194 (FTTLT), 212–215 (DLPG), 282–285 (TQMD), and 309–311 (SSV). Mg(2+)-binding residues include Ser172 and Thr192. In terms of domain architecture, OCT spans 350–428 (YKKPEDEGFK…IADFTFEFVD (79 aa)).

The protein belongs to the TRAFAC class OBG-HflX-like GTPase superfamily. OBG GTPase family. Monomer. Mg(2+) is required as a cofactor.

The protein resides in the cytoplasm. Functionally, an essential GTPase which binds GTP, GDP and possibly (p)ppGpp with moderate affinity, with high nucleotide exchange rates and a fairly low GTP hydrolysis rate. Plays a role in control of the cell cycle, stress response, ribosome biogenesis and in those bacteria that undergo differentiation, in morphogenesis control. This Lactobacillus johnsonii (strain CNCM I-12250 / La1 / NCC 533) protein is GTPase Obg.